Here is a 437-residue protein sequence, read N- to C-terminus: Enolase 1 (437 aa).

A Glycyl lysine isopeptide (Lys-Gly) (interchain with G-Cter in ubiquitin) cross-link involves residue K60. A phosphoserine mark is found at S119 and S138. Residues H160 and E169 each coordinate substrate. Position 188 is a phosphoserine (S188). The active-site Proton donor is E212. Residue K243 forms a Glycyl lysine isopeptide (Lys-Gly) (interchain with G-Cter in ubiquitin) linkage. D247 and E296 together coordinate Mg(2+). Residue E296 participates in substrate binding. T313 carries the post-translational modification Phosphothreonine. Residue D321 participates in substrate binding. D321 is a binding site for Mg(2+). T324 carries the phosphothreonine modification. Residue K346 is the Proton acceptor of the active site. K358 is covalently cross-linked (Glycyl lysine isopeptide (Lys-Gly) (interchain with G-Cter in ubiquitin)). Substrate contacts are provided by residues 373–376 (SHRS) and K397.

This sequence belongs to the enolase family. Homodimer. The cofactor is Mg(2+).

Its subcellular location is the cytoplasm. It carries out the reaction (2R)-2-phosphoglycerate = phosphoenolpyruvate + H2O. Its pathway is carbohydrate degradation; glycolysis; pyruvate from D-glyceraldehyde 3-phosphate: step 4/5. In Saccharomyces cerevisiae (strain ATCC 204508 / S288c) (Baker's yeast), this protein is Enolase 1 (ENO1).